We begin with the raw amino-acid sequence, 251 residues long: NLP effector protein Pc129485 (251 aa).

Positions 1 to 19 are cleaved as a signal peptide; sequence MNFRIVLLVLVASLAGAQA. A Hepta-peptide GHRHDWE motif motif is present at residues 127 to 133; that stretch reads GHRHNWE. 2 N-linked (GlcNAc...) asparagine glycosylation sites follow: Asn-146 and Asn-218.

Belongs to the Necrosis inducing protein (NPP1) family.

It localises to the secreted. In terms of biological role, secreted effector that contributes strongly to virulence during infection by P.capsici. The chain is NLP effector protein Pc129485 from Phytophthora capsici.